The following is a 363-amino-acid chain: Anhydro-N-acetylmuramic acid kinase (363 aa).

An ATP-binding site is contributed by 10–17; the sequence is GTSLDGMD.

It belongs to the anhydro-N-acetylmuramic acid kinase family.

The catalysed reaction is 1,6-anhydro-N-acetyl-beta-muramate + ATP + H2O = N-acetyl-D-muramate 6-phosphate + ADP + H(+). It participates in amino-sugar metabolism; 1,6-anhydro-N-acetylmuramate degradation. It functions in the pathway cell wall biogenesis; peptidoglycan recycling. In terms of biological role, catalyzes the specific phosphorylation of 1,6-anhydro-N-acetylmuramic acid (anhMurNAc) with the simultaneous cleavage of the 1,6-anhydro ring, generating MurNAc-6-P. Is required for the utilization of anhMurNAc either imported from the medium or derived from its own cell wall murein, and thus plays a role in cell wall recycling. Contributes to intrinsic fosfomycin resistance in P.aeruginosa. In Pseudomonas aeruginosa (strain ATCC 15692 / DSM 22644 / CIP 104116 / JCM 14847 / LMG 12228 / 1C / PRS 101 / PAO1), this protein is Anhydro-N-acetylmuramic acid kinase.